Here is a 118-residue protein sequence, read N- to C-terminus: Large ribosomal subunit protein uL18 (118 aa).

This sequence belongs to the universal ribosomal protein uL18 family. Part of the 50S ribosomal subunit; part of the 5S rRNA/L5/L18/L25 subcomplex. Contacts the 5S and 23S rRNAs.

Functionally, this is one of the proteins that bind and probably mediate the attachment of the 5S RNA into the large ribosomal subunit, where it forms part of the central protuberance. The sequence is that of Large ribosomal subunit protein uL18 from Nitrosospira multiformis (strain ATCC 25196 / NCIMB 11849 / C 71).